Here is a 482-residue protein sequence, read N- to C-terminus: MEVCYQLPVLPLDRPVPQHVLSRRGAISFSSSSALFGCPNPRQLSQRRGAISYDSSDQTALYIRMLGDVRVRSRAGFESERRGSHPYIDFRIFHSQSEIEVSVSARNIRRLLSFQRYLRSSRFFRGTAVSNSLNILDDDYNGQAKCMLEKVGNWNFDIFLFDRLTNGNSLVSLTFHLFSLHGLIEYFHLDMMKLRRFLVMIQEDYHSQNPYHNAVHAADVTQAMHCYLKEPKLANSVTPWDILLSLIAAATHDLDHPGVNQPFLIKTNHYLATLYKNTSVLENHHWRSAVGLLRESGLFSHLPLESRQQMETQIGALILATDISRQNEYLSLFRSHLDRGDLCLEDTRHRHLVLQMALKCADICNPCRTWELSKQWSEKVTEEFFHQGDIEKKYHLGVSPLCDRHTESIANIQIGFMTYLVEPLFTEWARFSNTRLSQTMLGHVGLNKASWKGLQREQSSSEDTDAAFELNSQLLPQENRLS.

Ser84 bears the Phosphoserine mark. Positions 136–458 constitute a PDEase domain; that stretch reads LDDDYNGQAK…ASWKGLQREQ (323 aa). Residue His212 is the Proton donor of the active site. 4 residues coordinate a divalent metal cation: His216, His252, Asp253, and Asp362.

The protein belongs to the cyclic nucleotide phosphodiesterase family. PDE7 subfamily. Interacts with CBFA2T3. A divalent metal cation serves as cofactor. In terms of tissue distribution, found at high levels in skeletal muscle and at low levels in a variety of tissues including brain and heart. It is expressed as well in two T-cell lines. As to expression, found abundantly in skeletal muscle and at low levels in heart.

It is found in the cytoplasm. Its subcellular location is the cytosol. The enzyme catalyses 3',5'-cyclic AMP + H2O = AMP + H(+). It functions in the pathway purine metabolism; 3',5'-cyclic AMP degradation; AMP from 3',5'-cyclic AMP: step 1/1. Insensitive to all selective PDE inhibitors. Functionally, hydrolyzes the second messenger cAMP, which is a key regulator of many important physiological processes. May have a role in muscle signal transduction. This is High affinity 3',5'-cyclic-AMP phosphodiesterase 7A from Homo sapiens (Human).